The primary structure comprises 520 residues: Ubiquitin carboxyl-terminal hydrolase 3 (520 aa).

Met1 carries the post-translational modification N-acetylmethionine. The segment at 1-121 (MECPHLSSSV…QKVREHLQNL (121 aa)) adopts a UBP-type zinc-finger fold. The Zn(2+) site is built by Cys3, His5, Cys29, Cys32, Cys41, Cys44, Cys49, His56, His60, His82, Cys95, and Cys98. Residues 159–511 (TGLRNLGNTC…KAYILFYVEH (353 aa)) enclose the USP domain. Cys168 acts as the Nucleophile in catalysis. His471 (proton acceptor) is an active-site residue.

This sequence belongs to the peptidase C19 family. USP3 subfamily. As to quaternary structure, interacts (via UBP-type domain) with H2A; the interaction is less efficient than with monoubiquitinated H2A. As to expression, expressed in all tissues examined, with strongest expression in pancreas.

It is found in the nucleus. The protein resides in the cytoplasm. The enzyme catalyses Thiol-dependent hydrolysis of ester, thioester, amide, peptide and isopeptide bonds formed by the C-terminal Gly of ubiquitin (a 76-residue protein attached to proteins as an intracellular targeting signal).. Deubiquitinase that plays a role in several cellular processes including transcriptional regulation, cell cycle progression or innate immunity. In response to DNA damage, deubiquitinates monoubiquitinated target proteins such as histone H2A and H2AX and thereby counteracts RNF168- and RNF8-mediated ubiquitination. In turn, participates in the recruitment of DNA damage repair factors to DNA break sites. Required for proper progression through S phase and subsequent mitotic entry. Acts as a positive regulator of TP53 by deubiquitinating and stabilizing it to promote normal cell proliferation and transformation. Participates in establishing tolerance innate immune memory through non-transcriptional feedback. Mechanistically, negatively regulates TLR-induced NF-kappa-B signaling by targeting and removing the 'Lys-63'-linked polyubiquitin chains on MYD88. Negatively regulates the activation of type I interferon signaling by mediating 'Lys-63'-linked polyubiquitin chains on RIGI and IFIH1. Also deubiquinates ASC/PYCARD, the central adapter mediating the assembly and activation of most inflammasomes, and thereby promotes inflammasome activation. The protein is Ubiquitin carboxyl-terminal hydrolase 3 (USP3) of Homo sapiens (Human).